We begin with the raw amino-acid sequence, 498 residues long: ATP synthase subunit beta, chloroplastic (498 aa).

Position 172 to 179 (172 to 179 (GGAGVGKT)) interacts with ATP.

This sequence belongs to the ATPase alpha/beta chains family. As to quaternary structure, F-type ATPases have 2 components, CF(1) - the catalytic core - and CF(0) - the membrane proton channel. CF(1) has five subunits: alpha(3), beta(3), gamma(1), delta(1), epsilon(1). CF(0) has four main subunits: a(1), b(1), b'(1) and c(9-12).

The protein localises to the plastid. The protein resides in the chloroplast thylakoid membrane. The catalysed reaction is ATP + H2O + 4 H(+)(in) = ADP + phosphate + 5 H(+)(out). Functionally, produces ATP from ADP in the presence of a proton gradient across the membrane. The catalytic sites are hosted primarily by the beta subunits. The sequence is that of ATP synthase subunit beta, chloroplastic from Vitis vinifera (Grape).